A 368-amino-acid polypeptide reads, in one-letter code: sn-1 linoleoyl-lipid 6-desaturase (368 aa).

2 consecutive transmembrane segments (helical) span residues 47-67 and 68-88; these read IILA…DVLW and MKLL…FNIS. Positions 89-93 match the Histidine box-1 motif; that stretch reads HDGNH. Positions 124 to 129 match the Histidine box-2 motif; sequence HNVLHH. The next 3 helical transmembrane spans lie at 164 to 184, 204 to 224, and 233 to 253; these read WFIW…DVQT, IATL…IPIA, and VIGA…VFML. The short motif at 305-309 is the Histidine box-3 element; it reads HHLFP.

The protein belongs to the fatty acid desaturase type 2 family. It depends on Fe(2+) as a cofactor.

The protein localises to the cell inner membrane. It is found in the cellular thylakoid membrane. The catalysed reaction is a 1-[(9Z,12Z)-octadecdienoyl]-2-acyl-glycerolipid + 2 reduced [2Fe-2S]-[ferredoxin] + O2 + 2 H(+) = a 1-[(6Z,9Z,12Z)-octadectrienoyl]-2-acyl-glycerolipid + 2 oxidized [2Fe-2S]-[ferredoxin] + 2 H2O. It functions in the pathway lipid metabolism; polyunsaturated fatty acid biosynthesis. With respect to regulation, activity requires ferredoxin, which is the natural electron donor, or cytochrome b5. In addition, activity is increased in the presence of the intermediate electron donors, NADPH and FADH(2). In terms of biological role, desaturase involved in fatty acid biosynthesis. Introduces a double bond at carbon 6 of linoleoyl group (18:2) attached to the sn-1 position of the glycerol moiety of membrane glycerolipids, leading to the formation of gamma-linolenic acid (GLA). This is sn-1 linoleoyl-lipid 6-desaturase from Arthrospira platensis (Spirulina platensis).